We begin with the raw amino-acid sequence, 395 residues long: Dual specificity protein phosphatase 4 (395 aa).

At V2 the chain carries N-acetylvaline. The Rhodanese domain maps to 42–160; the sequence is SGGKCLLLDC…FSSEYPEFCS (119 aa). Residues 196–337 enclose the Tyrosine-protein phosphatase domain; that stretch reads GPVEILPFLY…LLQFESQVLT (142 aa). C281 serves as the catalytic Phosphocysteine intermediate. 2 positions are modified to phosphoserine; by MAPK: S387 and S392.

This sequence belongs to the protein-tyrosine phosphatase family. Non-receptor class dual specificity subfamily. Hollow spherical complex composed of 24 subunits with pseudooctahedral symmetry, has a tetramer as the basic unit. Post-translationally, phosphorylation in the C-terminus by ERK1/2 inhibits proteasomal degradation and stabilizes the protein. Expressed at moderate levels in nearly all tissues and cells including brain, spleen, and testes with the higher expression in the heart and lung and lower expression in skeletal muscle and kidney. Undetectable in liver. Expressed in many areas of the brain with very strong expression in the hippocampus, piriform cortex, and the suprachiasmatic nucleus.

The protein resides in the nucleus. It catalyses the reaction O-phospho-L-tyrosyl-[protein] + H2O = L-tyrosyl-[protein] + phosphate. The enzyme catalyses O-phospho-L-seryl-[protein] + H2O = L-seryl-[protein] + phosphate. The catalysed reaction is O-phospho-L-threonyl-[protein] + H2O = L-threonyl-[protein] + phosphate. Its function is as follows. Regulates mitogenic signal transduction by dephosphorylating both Thr and Tyr residues on MAP kinases ERK1 and ERK2. The sequence is that of Dual specificity protein phosphatase 4 (Dusp4) from Rattus norvegicus (Rat).